The sequence spans 598 residues: MFKISRKNYSDLYGITTGDSVRLGDTNLWVKVEKDLTTYGEESVFGGGKTLREGMGMNSTMKLDDKLGNAEVMDLVITNALILDYTGIYKADIGIKNGKIASIGKSGNPHLTDGVDMVVGISTEVSAGEGKIYTAGGLDTHVHWLEPEIVPVALDGGITTVIAGGTGMNDGTKATTVSPGKFWVKSALQAADGLPINAGFLAKGQGMEDPIFEQIVAGACGLKIHEDWGATGNAIDLALTVAEKTDVAVAIHTDTLNEAGFVEHTIAAMKGRTIHAYHTEGAGGGHAPDILESVKYAHILPASTNPTIPYTVNTIAEHLDMLMVCHHLNPKVPEDVAFADSRIRSQTIAAEDLLHDMGAISIMSSDTLAMGRIGEVVTRSWQMAHKMKAQFGALKGDSEFNDNNRVKRYVAKYTINPAIAHGIDSYVGSIEVGKLADIVAWEPKFFGAKPYYVVKMGVIARCVAGDPNASIPTCEPVIMRDQFGTYGRSLTSTSVSFVSKIGLENGIKEEYKLEKELLPVKNCRSINKKSMKWNSATPNLEVDPQTFDAAVDYNDLENWLEQPAAELAKKLKKTANGKYVLDAEPLTEAPLAQRYFLF.

The region spanning 136 to 598 (GGLDTHVHWL…APLAQRYFLF (463 aa)) is the Urease domain. The Ni(2+) site is built by H141, H143, and K223. K223 carries the N6-carboxylysine modification. Position 225 (H225) interacts with substrate. Residues H252 and H278 each coordinate Ni(2+). The active-site Proton donor is H326. D366 lines the Ni(2+) pocket.

The protein belongs to the metallo-dependent hydrolases superfamily. Urease alpha subunit family. In terms of assembly, heterotrimer of UreA (gamma), UreB (beta) and UreC (alpha) subunits. Three heterotrimers associate to form the active enzyme. Requires Ni cation as cofactor. Post-translationally, carboxylation allows a single lysine to coordinate two nickel ions.

It localises to the cytoplasm. It catalyses the reaction urea + 2 H2O + H(+) = hydrogencarbonate + 2 NH4(+). Its pathway is nitrogen metabolism; urea degradation; CO(2) and NH(3) from urea (urease route): step 1/1. This Ureaplasma urealyticum serovar 10 (strain ATCC 33699 / Western) protein is Urease subunit alpha.